The sequence spans 771 residues: Carnitine O-palmitoyltransferase 1, muscle isoform (771 aa).

At 1 to 47 the chain is on the cytoplasmic side; it reads MAEAHQAVAFQFTVTPEGVDFQLSREVLKHIYLSVIRSWKKRLIRIK. A helical membrane pass occupies residues 48-73; the sequence is NGILRGVYPGSPTSWLVVVMATAGSS. At 74–101 the chain is on the mitochondrial intermembrane side; the sequence is YYNVDISMGLVYYIQRWLPEGRPYRTPY. The chain crosses the membrane as a helical span at residues 102–121; sequence TRTLFSMAIFSTGVWMMGIF. The Cytoplasmic segment spans residues 122–771; that stretch reads FFRQTLKLLL…NLFQVPKADG (650 aa). Catalysis depends on His472, which acts as the Proton acceptor. CoA is bound at residue 554–566; the sequence is GKGLIKKCRTSPD. (R)-carnitine-binding residues include Tyr588 and Thr601.

Belongs to the carnitine/choline acetyltransferase family.

Its subcellular location is the mitochondrion outer membrane. It carries out the reaction (R)-carnitine + hexadecanoyl-CoA = O-hexadecanoyl-(R)-carnitine + CoA. Its pathway is lipid metabolism; fatty acid beta-oxidation. Its function is as follows. Catalyzes the transfer of the acyl group of long-chain fatty acid-CoA conjugates onto carnitine, an essential step for the mitochondrial uptake of long-chain fatty acids and their subsequent beta-oxidation in the mitochondrion. This Bos taurus (Bovine) protein is Carnitine O-palmitoyltransferase 1, muscle isoform (CPT1B).